A 434-amino-acid chain; its full sequence is Putative DD-carboxypeptidase TP_0574 (434 aa).

Positions 1-19 (MKVKYALLSAGALQLLVVG) are cleaved as a signal peptide. The N-palmitoyl cysteine moiety is linked to residue C20. The S-diacylglycerol cysteine moiety is linked to residue C20.

In terms of assembly, probably a monomer; a non-lipidated construct (residues 22-434) is monomeric in solution but crystallizes as a homodimer. Zn(2+) is required as a cofactor. The N-terminus is blocked. Present as a doublet of low abundance 48 kDa and high abundance 47 kDa proteins. The longer form is probably due to readthrough of the stop codon; the extra amino acids at the C-terminus would be X-Lys-Arg-Gly-Val-Leu-Ser-Arg-Val-Ser, a peptide antibody against this sequence detects only the 48 kDa form.

The protein resides in the cell inner membrane. Its function is as follows. A possible D,D-carboxypeptidase, that releases amino acids sequentially from a proteins C-terminus. Has zinc-dependent carboxypeptidase activity on synthetic depsipeptide substrates. May serve to decrease cross-linking of peptidoglycan, promoting the highly sinusous motility of this spirochaete. Overexpression of the whole protein in E.coli leads to aberrant cell morphology and extrusion of the cytoplasm, while overexpression of a construct with the first 62 resides of the protein fused to PhoA does have this effect, suggesting the whole protein, not the lipoprotein moiety, is toxic. Binds penicillin. Penicillin binding is covalent, does not require lipidation, and is zinc-dependent. While this protein has beta-lactamase activity in vitro, that is probably not its role in vivo, as T.pallidum is very sensitive to penicillin antibiotics. In terms of biological role, a pathogen-specific membrane antigen. Most abundant of the membrane lipoproteins, only found in pathogenic treponemes, suggesting that it is an important structural moiety in the cell envelope of virulent treponemal subspecies. A lipopeptide corresponding to the first 6 mature residues induces host (human and mouse) cytokine release by monocyte cell lines via TLR2 and CD14; nonlipidated protein does not stimulate host cells. Stimulates host (human) dendritic cell maturation to become MHC class II-positive antigen presenting cells via TLR2, which depends on lipidation; nonlipidated protein does not stimulate maturation. In Treponema pallidum (strain Nichols), this protein is Putative DD-carboxypeptidase TP_0574.